We begin with the raw amino-acid sequence, 150 residues long: Large ribosomal subunit protein uL16 (150 aa).

It belongs to the universal ribosomal protein uL16 family. As to quaternary structure, component of the small ribosomal subunit. Mature ribosomes consist of a small (40S) and a large (60S) subunit. The 40S subunit contains about 33 different proteins and 1 molecule of RNA (18S). The 60S subunit contains about 49 different proteins and 3 molecules of RNA (25S, 5.8S and 5S).

In Nicotiana tabacum (Common tobacco), this protein is Large ribosomal subunit protein uL16 (RPL10).